The chain runs to 420 residues: Nucleobindin-2 (420 aa).

The signal sequence occupies residues M1–A24. The DNA-binding element occupies R171 to P223. Residues T194 to S225 form a disordered region. Positions K213–T420 are binds to necdin. 2 EF-hand domains span residues P241–K276 and E293–L328. Residues D254, N256, D258, E265, D306, N308, D310, and E317 each contribute to the Ca(2+) site. The GBA motif lies at E304–E334. At S332 the chain carries Phosphoserine. A compositionally biased stretch (basic and acidic residues) spans D366–K386. Residues D366–T420 are disordered. The segment covering Q387 to L396 has biased composition (low complexity).

Belongs to the nucleobindin family. Interacts (via GBA motif) with guanine nucleotide-binding protein G(i) alpha subunit GNAI3. Preferentially interacts with inactive rather than active GNAI3. Interaction with GNAI3 is inhibited when NUCB2 binds calcium, probably due to a conformational change which renders the GBA motif inaccessible. Binds to the postmitotic growth suppressor NDN; coexpression abolishes NUCB2 secretion. Interacts with MC4R.

The protein localises to the golgi apparatus. Its subcellular location is the endoplasmic reticulum. It localises to the nucleus envelope. It is found in the membrane. The protein resides in the cytoplasm. The protein localises to the secreted. In terms of biological role, calcium-binding protein which may have a role in calcium homeostasis. Acts as a non-receptor guanine nucleotide exchange factor which binds to and activates guanine nucleotide-binding protein (G-protein) alpha subunit GNAI3. Functionally, anorexigenic peptide, seems to play an important role in hypothalamic pathways regulating food intake and energy homeostasis, acting in a leptin-independent manner. May also exert hypertensive roles and modulate blood pressure through directly acting on peripheral arterial resistance. In intestinal epithelial cells, plays a role in the inhibition of hepatic glucose production via MC4R receptor leading to increased cyclic adenosine monophosphate (cAMP) levels and glucagon-like peptide 1 (GLP-1) secretion. This is Nucleobindin-2 (Nucb2) from Rattus norvegicus (Rat).